The chain runs to 264 residues: Thymidylate synthase (264 aa).

DUMP is bound by residues Arg-21 and 126-127 (RR). Catalysis depends on Cys-146, which acts as the Nucleophile. DUMP-binding positions include 166–169 (RSAD), Asn-177, and 207–209 (HLY). Position 169 (Asp-169) interacts with (6R)-5,10-methylene-5,6,7,8-tetrahydrofolate. Ala-263 provides a ligand contact to (6R)-5,10-methylene-5,6,7,8-tetrahydrofolate.

The protein belongs to the thymidylate synthase family. Bacterial-type ThyA subfamily. In terms of assembly, homodimer.

The protein resides in the cytoplasm. It catalyses the reaction dUMP + (6R)-5,10-methylene-5,6,7,8-tetrahydrofolate = 7,8-dihydrofolate + dTMP. It functions in the pathway pyrimidine metabolism; dTTP biosynthesis. In terms of biological role, catalyzes the reductive methylation of 2'-deoxyuridine-5'-monophosphate (dUMP) to 2'-deoxythymidine-5'-monophosphate (dTMP) while utilizing 5,10-methylenetetrahydrofolate (mTHF) as the methyl donor and reductant in the reaction, yielding dihydrofolate (DHF) as a by-product. This enzymatic reaction provides an intracellular de novo source of dTMP, an essential precursor for DNA biosynthesis. In Rhodopseudomonas palustris (strain ATCC BAA-98 / CGA009), this protein is Thymidylate synthase.